The primary structure comprises 179 residues: NAD(P)H-quinone oxidoreductase subunit I, chloroplastic (179 aa).

4Fe-4S ferredoxin-type domains follow at residues 55–84 and 95–124; these read GRIHFEFDKCIACEVCVRVCPIDLPVVDWR and LNYSIDFGVCIFCGNCVEYCPTNCLSMTEE. The [4Fe-4S] cluster site is built by C64, C67, C70, C74, C104, C107, C110, and C114.

The protein belongs to the complex I 23 kDa subunit family. NDH is composed of at least 16 different subunits, 5 of which are encoded in the nucleus. [4Fe-4S] cluster is required as a cofactor.

It is found in the plastid. The protein resides in the chloroplast thylakoid membrane. The catalysed reaction is a plastoquinone + NADH + (n+1) H(+)(in) = a plastoquinol + NAD(+) + n H(+)(out). It catalyses the reaction a plastoquinone + NADPH + (n+1) H(+)(in) = a plastoquinol + NADP(+) + n H(+)(out). In terms of biological role, NDH shuttles electrons from NAD(P)H:plastoquinone, via FMN and iron-sulfur (Fe-S) centers, to quinones in the photosynthetic chain and possibly in a chloroplast respiratory chain. The immediate electron acceptor for the enzyme in this species is believed to be plastoquinone. Couples the redox reaction to proton translocation, and thus conserves the redox energy in a proton gradient. The protein is NAD(P)H-quinone oxidoreductase subunit I, chloroplastic of Acorus calamus (Sweet flag).